The primary structure comprises 139 residues: ATP synthase epsilon chain (139 aa).

It belongs to the ATPase epsilon chain family. F-type ATPases have 2 components, CF(1) - the catalytic core - and CF(0) - the membrane proton channel. CF(1) has five subunits: alpha(3), beta(3), gamma(1), delta(1), epsilon(1). CF(0) has three main subunits: a, b and c.

The protein resides in the cell inner membrane. Produces ATP from ADP in the presence of a proton gradient across the membrane. This is ATP synthase epsilon chain from Escherichia coli O139:H28 (strain E24377A / ETEC).